Consider the following 670-residue polypeptide: Soluble lamin-associated protein of 75 kDa (670 aa).

Disordered stretches follow at residues 273–301 (PKRP…SSEM) and 314–670 (STSE…AKLT). Ser350 is subject to Phosphoserine. Over residues 358-375 (SQTSLTASINKLESTARP) the composition is skewed to polar residues. The span at 378–387 (SSEEFLEEEP) shows a compositional bias: acidic residues. Ser379 carries the phosphoserine modification. Residues 414 to 423 (EKQDGEKESE) are compositionally biased toward basic and acidic residues. The segment covering 442–453 (TEEEDSTSEVLD) has biased composition (acidic residues). The residue at position 449 (Ser449) is a Phosphoserine. Positions 460-470 (PFNSSEDSTNL) are enriched in polar residues. Composition is skewed to basic and acidic residues over residues 479–494 (KPPE…RIPD) and 504–514 (SDEKGHMEEKL). A Phosphoserine modification is found at Ser515. Composition is skewed to polar residues over residues 558–569 (ENLSPNTTSSLE) and 579–591 (PQET…QSSL). Residues Ser615, Ser618, and Ser635 each carry the phosphoserine modification. A compositionally biased stretch (basic residues) spans 651 to 670 (NLRRKAKGHKGPAKKKAKLT).

This sequence belongs to the FAM169 family.

The protein localises to the nucleus envelope. It localises to the nucleus inner membrane. The polypeptide is Soluble lamin-associated protein of 75 kDa (FAM169A) (Homo sapiens (Human)).